The chain runs to 565 residues: Protein nucleotidyltransferase YdiU (565 aa).

ATP is bound by residues glycine 118, glycine 120, arginine 121, lysine 141, aspartate 153, glycine 154, arginine 211, and arginine 218. Aspartate 290 (proton acceptor) is an active-site residue. The Mg(2+) site is built by asparagine 291 and aspartate 300. Aspartate 300 serves as a coordination point for ATP.

Belongs to the SELO family. It depends on Mg(2+) as a cofactor. Requires Mn(2+) as cofactor.

The enzyme catalyses L-seryl-[protein] + ATP = 3-O-(5'-adenylyl)-L-seryl-[protein] + diphosphate. The catalysed reaction is L-threonyl-[protein] + ATP = 3-O-(5'-adenylyl)-L-threonyl-[protein] + diphosphate. It catalyses the reaction L-tyrosyl-[protein] + ATP = O-(5'-adenylyl)-L-tyrosyl-[protein] + diphosphate. It carries out the reaction L-histidyl-[protein] + UTP = N(tele)-(5'-uridylyl)-L-histidyl-[protein] + diphosphate. The enzyme catalyses L-seryl-[protein] + UTP = O-(5'-uridylyl)-L-seryl-[protein] + diphosphate. The catalysed reaction is L-tyrosyl-[protein] + UTP = O-(5'-uridylyl)-L-tyrosyl-[protein] + diphosphate. In terms of biological role, nucleotidyltransferase involved in the post-translational modification of proteins. It can catalyze the addition of adenosine monophosphate (AMP) or uridine monophosphate (UMP) to a protein, resulting in modifications known as AMPylation and UMPylation. The sequence is that of Protein nucleotidyltransferase YdiU from Nitrosospira multiformis (strain ATCC 25196 / NCIMB 11849 / C 71).